A 141-amino-acid polypeptide reads, in one-letter code: Hemoglobin subunit alpha (141 aa).

The region spanning 1–141 (VLSGTDKTNV…VGLVLTAKYR (141 aa)) is the Globin domain. Residue H58 coordinates O2. H87 is a binding site for heme b.

The protein belongs to the globin family. Heterotetramer of two alpha chains and two beta chains. Red blood cells.

Its function is as follows. Involved in oxygen transport from the lung to the various peripheral tissues. In Psittacula krameri (Rose-ringed parakeet), this protein is Hemoglobin subunit alpha (HBA).